The following is a 79-amino-acid chain: RNA-binding protein Hfq (79 aa).

The 60-residue stretch at 10–69 (DPFLNALRKEHVPVSIYLVNGIKLQGNIESFDQYVVLLRNTVTQMVYKHAISTVVPARAV) folds into the Sm domain.

This sequence belongs to the Hfq family. In terms of assembly, homohexamer.

RNA chaperone that binds small regulatory RNA (sRNAs) and mRNAs to facilitate mRNA translational regulation in response to envelope stress, environmental stress and changes in metabolite concentrations. Also binds with high specificity to tRNAs. The chain is RNA-binding protein Hfq from Cupriavidus metallidurans (strain ATCC 43123 / DSM 2839 / NBRC 102507 / CH34) (Ralstonia metallidurans).